A 315-amino-acid chain; its full sequence is Tetratricopeptide repeat protein 23-like (315 aa).

Positions 28 to 56 are disordered; the sequence is KIPEHQRTDESSPTSGSEESEEDTKAKEK. 3 coiled-coil regions span residues 65 to 90, 179 to 200, and 250 to 280; these read REKL…ANKE, REAY…ESYK, and SELV…HQAH.

The protein localises to the cytoplasm. It is found in the cytoskeleton. The protein resides in the microtubule organizing center. Its subcellular location is the centrosome. It localises to the spindle. The protein localises to the midbody. In Bos taurus (Bovine), this protein is Tetratricopeptide repeat protein 23-like (TTC23L).